A 155-amino-acid chain; its full sequence is Xanthine-guanine phosphoribosyltransferase (155 aa).

5-phospho-alpha-D-ribose 1-diphosphate-binding positions include Arg37 to Gly38, Arg69, and Glu90 to Thr98. Residue Arg69 coordinates GMP. Position 91 (Asp91) interacts with Mg(2+). Guanine-binding residues include Asp94 and Ile137. Asp94 and Ile137 together coordinate xanthine. Residues Asp94–Thr98 and Trp136–Ile137 contribute to the GMP site.

Belongs to the purine/pyrimidine phosphoribosyltransferase family. XGPT subfamily. Homotetramer. Requires Mg(2+) as cofactor.

The protein localises to the cell inner membrane. The catalysed reaction is GMP + diphosphate = guanine + 5-phospho-alpha-D-ribose 1-diphosphate. It catalyses the reaction XMP + diphosphate = xanthine + 5-phospho-alpha-D-ribose 1-diphosphate. It carries out the reaction IMP + diphosphate = hypoxanthine + 5-phospho-alpha-D-ribose 1-diphosphate. The protein operates within purine metabolism; GMP biosynthesis via salvage pathway; GMP from guanine: step 1/1. Its pathway is purine metabolism; XMP biosynthesis via salvage pathway; XMP from xanthine: step 1/1. Its function is as follows. Purine salvage pathway enzyme that catalyzes the transfer of the ribosyl-5-phosphate group from 5-phospho-alpha-D-ribose 1-diphosphate (PRPP) to the N9 position of the 6-oxopurines guanine and xanthine to form the corresponding ribonucleotides GMP (guanosine 5'-monophosphate) and XMP (xanthosine 5'-monophosphate), with the release of PPi. To a lesser extent, also acts on hypoxanthine. In Aeromonas hydrophila subsp. hydrophila (strain ATCC 7966 / DSM 30187 / BCRC 13018 / CCUG 14551 / JCM 1027 / KCTC 2358 / NCIMB 9240 / NCTC 8049), this protein is Xanthine-guanine phosphoribosyltransferase.